The chain runs to 171 residues: Adenine phosphoribosyltransferase (171 aa).

This sequence belongs to the purine/pyrimidine phosphoribosyltransferase family. Homodimer.

It is found in the cytoplasm. It catalyses the reaction AMP + diphosphate = 5-phospho-alpha-D-ribose 1-diphosphate + adenine. Its pathway is purine metabolism; AMP biosynthesis via salvage pathway; AMP from adenine: step 1/1. Its function is as follows. Catalyzes a salvage reaction resulting in the formation of AMP, that is energically less costly than de novo synthesis. In Trichlorobacter lovleyi (strain ATCC BAA-1151 / DSM 17278 / SZ) (Geobacter lovleyi), this protein is Adenine phosphoribosyltransferase.